Here is a 497-residue protein sequence, read N- to C-terminus: Glutamate--tRNA ligase (497 aa).

The short motif at 13–23 is the 'HIGH' region element; it reads PSPTGDPHVGT. Positions 253-257 match the 'KMSKS' region motif; it reads KISKR. K256 is an ATP binding site.

The protein belongs to the class-I aminoacyl-tRNA synthetase family. Glutamate--tRNA ligase type 1 subfamily. In terms of assembly, monomer.

The protein localises to the cytoplasm. It carries out the reaction tRNA(Glu) + L-glutamate + ATP = L-glutamyl-tRNA(Glu) + AMP + diphosphate. Functionally, catalyzes the attachment of glutamate to tRNA(Glu) in a two-step reaction: glutamate is first activated by ATP to form Glu-AMP and then transferred to the acceptor end of tRNA(Glu). The sequence is that of Glutamate--tRNA ligase from Cutibacterium acnes (strain DSM 16379 / KPA171202) (Propionibacterium acnes).